The following is a 452-amino-acid chain: Zinc finger protein 277 (452 aa).

A C2H2-type 1 zinc finger spans residues 200-224; it reads LMCLYCEKIFRDRPTLKEHMRKKGH. The tract at residues 248-271 is disordered; the sequence is APTPRKQHLQKRRRETASVSTVAD. The segment covering 252 to 261 has biased composition (basic residues); the sequence is RKQHLQKRRR. Residues 361 to 385 form a C2H2-type 2 zinc finger; sequence LRCVTCDLQFDEEELLVEHMAQESH.

Belongs to the ZNF277 family. Interacts with components of the origin recognition complex (ORC) complex, Orc2 and Orc3, components of the SAGA transcription coactivator-HAT complex, Gcn5 and e(y)2, components of the mRNP biogenesis THO complex, thoc5 and e(y)2, and a component of the TFIID complex, TBP. Also interacts with polybromo, a component of the chromatin remodeling SWI/SNF complex.

Its subcellular location is the nucleus. The protein resides in the cytoplasm. Functionally, DNA binding protein which is involved in the positive regulation of both basal and inducible transcription. Mainly localizes to active promoter sites and interacts with components of various transcription and replication regulatory complexes, such as the ORC, SAGA, THO, TFIID and SWI/SNF complexes. It may therefore regulate transcription by promoting the association of these complexes to their binding sites. The polypeptide is Zinc finger protein 277 (Drosophila melanogaster (Fruit fly)).